The following is a 541-amino-acid chain: Chaperonin GroEL 2 (541 aa).

ATP contacts are provided by residues Thr30–Pro33, Lys51, Asp87–Thr91, Gly415, and Asp496.

The protein belongs to the chaperonin (HSP60) family. Forms a cylinder of 14 subunits composed of two heptameric rings stacked back-to-back. Interacts with the co-chaperonin GroES.

The protein localises to the cytoplasm. It catalyses the reaction ATP + H2O + a folded polypeptide = ADP + phosphate + an unfolded polypeptide.. In terms of biological role, together with its co-chaperonin GroES, plays an essential role in assisting protein folding. The GroEL-GroES system forms a nano-cage that allows encapsulation of the non-native substrate proteins and provides a physical environment optimized to promote and accelerate protein folding. This chain is Chaperonin GroEL 2, found in Bradyrhizobium sp. (strain BTAi1 / ATCC BAA-1182).